Consider the following 84-residue polypeptide: Large ribosomal subunit protein bL27 (84 aa).

Positions 1-24 (MAHKKGGGSSKNGRDSNSQRLGVK) are disordered.

This sequence belongs to the bacterial ribosomal protein bL27 family.

This chain is Large ribosomal subunit protein bL27, found in Leptospira borgpetersenii serovar Hardjo-bovis (strain JB197).